A 949-amino-acid chain; its full sequence is Bifunctional uridylyltransferase/uridylyl-removing enzyme (949 aa).

Residues 1 to 377 are uridylyltransferase; the sequence is MARHETSFPE…RFRNRVRKIA (377 aa). Positions 378 to 733 are uridylyl-removing; sequence GTLDFVDDGG…VRTHDFHAIT (356 aa). The region spanning 494–610 is the HD domain; that stretch reads VDEHLLRSVD…VDFAERVQSL (117 aa). ACT domains are found at residues 734–816 and 845–926; these read EITV…VIAS and VIEV…ERMP. A disordered region spans residues 926–949; the sequence is PSGIIAPTPVSRVPHGSKTTKAET.

Belongs to the GlnD family. It depends on Mg(2+) as a cofactor.

The enzyme catalyses [protein-PII]-L-tyrosine + UTP = [protein-PII]-uridylyl-L-tyrosine + diphosphate. The catalysed reaction is [protein-PII]-uridylyl-L-tyrosine + H2O = [protein-PII]-L-tyrosine + UMP + H(+). Uridylyltransferase (UTase) activity is inhibited by glutamine, while glutamine activates uridylyl-removing (UR) activity. Its function is as follows. Modifies, by uridylylation and deuridylylation, the PII regulatory proteins (GlnB and homologs), in response to the nitrogen status of the cell that GlnD senses through the glutamine level. Under low glutamine levels, catalyzes the conversion of the PII proteins and UTP to PII-UMP and PPi, while under higher glutamine levels, GlnD hydrolyzes PII-UMP to PII and UMP (deuridylylation). Thus, controls uridylylation state and activity of the PII proteins, and plays an important role in the regulation of nitrogen fixation and metabolism. In Rhizobium meliloti (strain 1021) (Ensifer meliloti), this protein is Bifunctional uridylyltransferase/uridylyl-removing enzyme.